Here is a 530-residue protein sequence, read N- to C-terminus: MEDDSLYLGGEWQFNHFSKLTSSRPDAAFAEIQRTSLPEKSPLSSEARVDLCDDLAPVARQLAPRKKLPLSSRRPAAVGAGLQNMGNTCYENASLQCLTYTPPLANYMLSREHSQTCQRPKCCMLCTMQAHITWALHSPGHVIQPSQALAAGFHRGKQEDAHEFLMFTVDAMKKACLPGHKQVDHHSKDTTLIHQIFGGCWRSQIKCLHCHGISDTFDPYLDIALDIQAAQSVKQALEQLVKPEELNGENAYHCGLCLQRAPASKTLTLHTSAKVLILVLKRFSDVTGNKLAKNVQYPECLDMQPYMSQQNTGPLVYVLYAVLVHAGWSCHDGHYFSYVKAQEGQWYKMDDAKVTACSITSVLSQQAYVLFYIQKSEWERHSESVSRGREPRALGAEDTDRRATQGELKRDHPCLQAPELDERLVERATQESTLDHWKFPQEQNKTKPEFNVRKVEGTLPPNVLVIHQSKYKCGMKNHHPEQQSSLLNLSSTTRTDQESVNTGTLASLQGRTRRSKGKNKHSKRALLVCQ.

Residues 80–375 (AGLQNMGNTC…QAYVLFYIQK (296 aa)) enclose the USP domain. Cys-89 acts as the Nucleophile in catalysis. The Proton acceptor role is filled by His-334. Composition is skewed to basic and acidic residues over residues 382–392 (SESVSRGREPR) and 398–413 (DTDR…RDHP). 2 disordered regions span residues 382–416 (SESV…PCLQ) and 490–530 (SSTT…LVCQ). A mediates interaction with SUDS3 region spans residues 399–530 (TDRRATQGEL…HSKRALLVCQ (132 aa)). Polar residues predominate over residues 498 to 510 (ESVNTGTLASLQG). Residues 511–524 (RTRRSKGKNKHSKR) show a composition bias toward basic residues.

This sequence belongs to the peptidase C19 family. USP17 subfamily. Interacts with SUDS3; the interaction is direct. In terms of tissue distribution, broadly expressed.

The protein localises to the nucleus. Its subcellular location is the endoplasmic reticulum. The enzyme catalyses Thiol-dependent hydrolysis of ester, thioester, amide, peptide and isopeptide bonds formed by the C-terminal Gly of ubiquitin (a 76-residue protein attached to proteins as an intracellular targeting signal).. Its function is as follows. Deubiquitinating enzyme that removes conjugated ubiquitin from specific proteins to regulate different cellular processes. Regulates cell proliferation by deubiquitinating and inhibiting RCE1 thereby controlling the small GTPases NRAS and HRAS localization and activation. In parallel, mediates deubiquitination of CDC25A, preventing CDC25A degradation by the proteasome during the G1/S and G2/M phases promoting cell-cycle progression. Also regulates cell proliferation and apoptosis through deubiquitination of SUDS3 a regulator of histone deacetylation. Through activation of the Rho family GTPases RAC1A, CDC42 and RHOA, regulates cell migration. Through the cleavage of 'Lys-48'- and 'Lys-63'-linked polyubiquitin chains of the cytoplasmic innate immune receptors RIGI and IFIH1 stimulates the cellular response to viral infection. The polypeptide is Ubiquitin carboxyl-terminal hydrolase 17 (USP17L2) (Homo sapiens (Human)).